A 138-amino-acid polypeptide reads, in one-letter code: ATP synthase epsilon chain (138 aa).

Belongs to the ATPase epsilon chain family. F-type ATPases have 2 components, CF(1) - the catalytic core - and CF(0) - the membrane proton channel. CF(1) has five subunits: alpha(3), beta(3), gamma(1), delta(1), epsilon(1). CF(0) has three main subunits: a, b and c.

It localises to the cell inner membrane. Functionally, produces ATP from ADP in the presence of a proton gradient across the membrane. The polypeptide is ATP synthase epsilon chain (Cupriavidus metallidurans (strain ATCC 43123 / DSM 2839 / NBRC 102507 / CH34) (Ralstonia metallidurans)).